A 520-amino-acid polypeptide reads, in one-letter code: Arginine biosynthesis bifunctional protein ArgJ, chloroplastic (520 aa).

Residues Thr264, Lys290, Thr301, Glu388, Asn515, and Thr520 each coordinate substrate. Thr301 functions as the Nucleophile in the catalytic mechanism.

This sequence belongs to the ArgJ family. In terms of assembly, heterodimer of an alpha and a beta chain.

It localises to the plastid. It is found in the chloroplast. It carries out the reaction N(2)-acetyl-L-ornithine + L-glutamate = N-acetyl-L-glutamate + L-ornithine. It catalyses the reaction L-glutamate + acetyl-CoA = N-acetyl-L-glutamate + CoA + H(+). It participates in amino-acid biosynthesis; L-arginine biosynthesis; L-ornithine and N-acetyl-L-glutamate from L-glutamate and N(2)-acetyl-L-ornithine (cyclic): step 1/1. The protein operates within amino-acid biosynthesis; L-arginine biosynthesis; N(2)-acetyl-L-ornithine from L-glutamate: step 1/4. Catalyzes two activities which are involved in the cyclic version of arginine biosynthesis: the synthesis of acetylglutamate from glutamate and acetyl-CoA, and of ornithine by transacetylation between acetylornithine and glutamate. The protein is Arginine biosynthesis bifunctional protein ArgJ, chloroplastic of Physcomitrium patens (Spreading-leaved earth moss).